The following is a 242-amino-acid chain: MSEWLFDLGNSRFKYAPLHGNRAGQVQAWAHGAEAMDAAALAALPSGQIAHVASVAAPALTQRMIACLQERFTQVRIVRTAAECAGIRIAYADPSRFGVDRFLALLGARGDAPVLVAGVGTALTIDVLGADGLHHGGCIAASPTTMREALHARAVQLPASGGDYVELAIDTDDALTSGCDGAAVALIERSLQHAQRSLGAPVRLLVHGGGAPPLLPLLPGATFRAALVLDGLATWATAAASP.

7-14 (DLGNSRFK) is a binding site for ATP. Substrate-binding positions include Y91 and 98–101 (GVDR). The Proton acceptor role is filled by D100. ATP is bound at residue T121. A substrate-binding site is contributed by T171.

This sequence belongs to the type III pantothenate kinase family. Homodimer. NH4(+) is required as a cofactor. It depends on K(+) as a cofactor.

The protein localises to the cytoplasm. The enzyme catalyses (R)-pantothenate + ATP = (R)-4'-phosphopantothenate + ADP + H(+). It functions in the pathway cofactor biosynthesis; coenzyme A biosynthesis; CoA from (R)-pantothenate: step 1/5. Its function is as follows. Catalyzes the phosphorylation of pantothenate (Pan), the first step in CoA biosynthesis. This is Type III pantothenate kinase from Xanthomonas oryzae pv. oryzae (strain MAFF 311018).